The following is a 295-amino-acid chain: G1/S-specific cyclin-D1 (295 aa).

In terms of domain architecture, Cyclin N-terminal spans 28–152; it reads LRAMLKTEET…LLVNKLKWNL (125 aa). The tract at residues 262–283 is disordered; the sequence is AQQNVDPKATEEEGEVEEEAGL. Lysine 269 participates in a covalent cross-link: Glycyl lysine isopeptide (Lys-Gly) (interchain with G-Cter in ubiquitin). Phosphothreonine is present on threonine 286.

Belongs to the cyclin family. Cyclin D subfamily. Interacts with either CDK4 or CDK6 protein kinase to form a serine/threonine kinase holoenzyme complex. The cyclin subunit imparts substrate specificity to the complex. Component of the ternary complex CCND1/CDK4/CDKN1B required for nuclear translocation and modulation of CDK4-mediated kinase activity. Interacts directly with CDKN1B. Can form similar complexes with either CDKN1A or CDKN2A. Interacts with UHRF2; the interaction ubiquitinates CCND1 and appears to occur independently of phosphorylation. Interacts with USP2. Interacts (via cyclin N-terminal domain) with INSM1 (via N-terminal region); the interaction competes with the binding of CCND1 to CDK4 during cell cycle progression and inhibits CDK4 activity. Interacts with CDK4; the interaction is prevented with the binding of CCND1 to INSM1 during cell cycle progression. In terms of processing, phosphorylation at Thr-286 by MAP kinases is required for ubiquitination and degradation by the DCX(AMBRA1) complex. It also plays an essential role for recognition by the FBXO31 component of SCF (SKP1-cullin-F-box) protein ligase complex following DNA damage. Post-translationally, ubiquitinated at Lys-269 by the DCX(AMBRA1) complex during the transition from G1 to S cell phase, leading to its degradation: ubiquitination is dependent on Thr-286 phosphorylation. The DCX(AMBRA1) complex represents the major regulator of CCND1 stability during the G1/S transition. Also ubiquitinated by the SCF(FBXO4) and Cul7-RING(FBXW8) ubiquitin-protein ligase complexes. Following DNA damage it is ubiquitinated by the SCF(FBXO31) protein ligase complex. SCF(FBXO31) ubiquitination is dependent on Thr-286 phosphorylation. Ubiquitinated also by UHRF2 apparently in a phosphorylation-independent manner. Ubiquitination leads to its degradation and G1 arrest. Deubiquitinated by USP2; leading to its stabilization. As to expression, expressed in the intestinal epithelium.

It localises to the nucleus. The protein localises to the cytoplasm. Its subcellular location is the nucleus membrane. Regulatory component of the cyclin D1-CDK4 (DC) complex that phosphorylates and inhibits members of the retinoblastoma (RB) protein family including RB1 and regulates the cell-cycle during G(1)/S transition. Phosphorylation of RB1 allows dissociation of the transcription factor E2F from the RB/E2F complex and the subsequent transcription of E2F target genes which are responsible for the progression through the G(1) phase. Hypophosphorylates RB1 in early G(1) phase. Cyclin D-CDK4 complexes are major integrators of various mitogenenic and antimitogenic signals. Also a substrate for SMAD3, phosphorylating SMAD3 in a cell-cycle-dependent manner and repressing its transcriptional activity. Component of the ternary complex, cyclin D1/CDK4/CDKN1B, required for nuclear translocation and activity of the cyclin D-CDK4 complex. Exhibits transcriptional corepressor activity with INSM1 on the NEUROD1 and INS promoters in a cell cycle-independent manner. The protein is G1/S-specific cyclin-D1 (Ccnd1) of Mus musculus (Mouse).